Here is a 213-residue protein sequence, read N- to C-terminus: MDTTTFPYDTARLGELAQLLIDNVRELAQAGWTPATSSNFSHRLDDRHAAITVSGKDKGRLIEDDIMVVDFDGKAVGRPLRPSAETLLHTQLYRRFPEIGCVLHTHSPVQTIASRLYAPQGHVHLEGYELLKAFAGNSTHEMAIDVPVFANTQDMNVLSKQVDDLLDRQNLWGYLIDGHGLYAWGRDMAEARRHLEAFEFLFHCELELRRLHG.

Residues histidine 104 and histidine 106 each coordinate Zn(2+).

This sequence belongs to the aldolase class II family. MtnB subfamily. Requires Zn(2+) as cofactor.

It carries out the reaction 5-(methylsulfanyl)-D-ribulose 1-phosphate = 5-methylsulfanyl-2,3-dioxopentyl phosphate + H2O. It functions in the pathway amino-acid biosynthesis; L-methionine biosynthesis via salvage pathway; L-methionine from S-methyl-5-thio-alpha-D-ribose 1-phosphate: step 2/6. Catalyzes the dehydration of methylthioribulose-1-phosphate (MTRu-1-P) into 2,3-diketo-5-methylthiopentyl-1-phosphate (DK-MTP-1-P). The polypeptide is Methylthioribulose-1-phosphate dehydratase (Stenotrophomonas maltophilia (strain K279a)).